We begin with the raw amino-acid sequence, 374 residues long: Erythronate-4-phosphate dehydrogenase (374 aa).

Positions 53 and 75 each coordinate substrate. NAD(+) is bound at residue Asp-160. Arg-222 is an active-site residue. Asp-246 provides a ligand contact to NAD(+). Residue Glu-251 is part of the active site. Catalysis depends on His-268, which acts as the Proton donor. An NAD(+)-binding site is contributed by Gly-271. Tyr-272 is a binding site for substrate.

It belongs to the D-isomer specific 2-hydroxyacid dehydrogenase family. PdxB subfamily. In terms of assembly, homodimer.

The protein localises to the cytoplasm. The catalysed reaction is 4-phospho-D-erythronate + NAD(+) = (R)-3-hydroxy-2-oxo-4-phosphooxybutanoate + NADH + H(+). It participates in cofactor biosynthesis; pyridoxine 5'-phosphate biosynthesis; pyridoxine 5'-phosphate from D-erythrose 4-phosphate: step 2/5. Its function is as follows. Catalyzes the oxidation of erythronate-4-phosphate to 3-hydroxy-2-oxo-4-phosphonooxybutanoate. In Psychrobacter sp. (strain PRwf-1), this protein is Erythronate-4-phosphate dehydrogenase.